A 208-amino-acid chain; its full sequence is Small ribosomal subunit protein uS4 (208 aa).

Residues 24-52 form a disordered region; that stretch reads GVKPFDVKTKKANKAPGQHGQARGGKQSE. Positions 98–160 constitute an S4 RNA-binding domain; the sequence is SRLDNVVYRM…AKQQLRIKNA (63 aa).

This sequence belongs to the universal ribosomal protein uS4 family. In terms of assembly, part of the 30S ribosomal subunit. Contacts protein S5. The interaction surface between S4 and S5 is involved in control of translational fidelity.

One of the primary rRNA binding proteins, it binds directly to 16S rRNA where it nucleates assembly of the body of the 30S subunit. Functionally, with S5 and S12 plays an important role in translational accuracy. In Acinetobacter baumannii (strain ACICU), this protein is Small ribosomal subunit protein uS4.